The primary structure comprises 1733 residues: Collagen alpha-1(XXIV) chain (1733 aa).

The N-terminal stretch at 1-35 is a signal peptide; the sequence is MHLGAYRTRHGKVSPTTETKLFLRFIVLCVVWISV. In terms of domain architecture, Laminin G-like spans 102-229; it reads ISLRQPLTVL…TVCQLEIMPS (128 aa). N-linked (GlcNAc...) asparagine glycosylation occurs at Asn-157. The tract at residues 257-335 is disordered; the sequence is PHTAGMPTRH…SQEHQTPRAQ (79 aa). A compositionally biased stretch (polar residues) spans 312 to 324; it reads IPNNRSNGSATVH. Residues Asn-366, Asn-396, and Asn-448 are each glycosylated (N-linked (GlcNAc...) asparagine). The interval 505–1499 is disordered; that stretch reads YLRGPKGDPG…GPPGAPGPRR (995 aa). 15 consecutive Collagen-like domains span residues 506-561, 577-636, 679-738, 742-801, 802-861, 886-945, 946-1005, 1006-1065, 1072-1131, 1135-1189, 1191-1215, 1220-1279, 1316-1375, 1376-1435, and 1439-1498; these read LRGP…PGLS, GLVG…KGVR, GPAG…KGEQ, GEPG…PGQN, GPEG…KGEV, GSIG…KGQR, GPRG…SGDV, GPAG…PGPR, GEEG…PGQR, GKKG…GIPG, RGHQ…PGED, GPPG…KGER, GVDG…KGEQ, GLPG…AGIV, and GPKG…PGPR. The span at 512–524 shows a compositional bias: pro residues; it reads DPGPPGPPGPMGI. Low complexity-rich tracts occupy residues 573 to 599 and 699 to 708; these read PGLL…LPGL and PGVTGSVGPA. The span at 776-789 shows a compositional bias: pro residues; that stretch reads DPGPQGPSGPPGPE. The segment covering 912-921 has biased composition (pro residues); sequence PGPPGAPGPM. The span at 923–944 shows a compositional bias: low complexity; the sequence is PLGLPGLVGARGAPGSPGPKGQ. Residues 1045-1054 are compositionally biased toward gly residues; sequence GAKGDGGPAG. Residues 1056 to 1074 are compositionally biased toward low complexity; it reads AGATGEPGPRGEPGAPGEE. The segment covering 1084 to 1093 has biased composition (gly residues); it reads GAPGGSGLPG. The segment covering 1175–1205 has biased composition (low complexity); it reads PLGLMGPEGEPGIPGYRGHQGQPGPSGLPGP. Residues 1237-1246 show a composition bias toward basic and acidic residues; the sequence is TGEHGEEGYK. Residues 1323-1339 are compositionally biased toward low complexity; sequence YPGKPGLPGKQGLLGVP. Gly residues predominate over residues 1352-1361; that stretch reads GPQGGKGASG. 2 stretches are compositionally biased toward low complexity: residues 1371–1386 and 1434–1444; these read PKGE…VPGQ and IVGIVGPKGPI. Positions 1485–1495 are enriched in pro residues; sequence QPGPPGPPGAP. The Fibrillar collagen NC1 domain maps to 1534-1733; it reads SDIFKTLTYL…YIESNSVCFL (200 aa).

Belongs to the fibrillar collagen family. As to expression, expressed in skeleton. Found at ossification centers of the craniofacial, axial and appendicular skeleton. Also expressed in retina and to a lower extent in cornea, skin and tendon.

It is found in the secreted. The protein resides in the extracellular space. Its subcellular location is the extracellular matrix. Functionally, involved in osteoblast differentiation. The polypeptide is Collagen alpha-1(XXIV) chain (Col24a1) (Mus musculus (Mouse)).